The chain runs to 27 residues: VPPVYADLGKGARDLFSKGYNYGFSKL.

The protein belongs to the eukaryotic mitochondrial porin family. In terms of assembly, interacts with hexokinases. In terms of tissue distribution, photoreceptors.

The protein localises to the mitochondrion outer membrane. Its function is as follows. Forms a channel through the cell membrane that allows diffusion of small hydrophilic molecules. This is Voltage-dependent anion-selective channel protein from Doryteuthis pealeii (Longfin inshore squid).